A 641-amino-acid polypeptide reads, in one-letter code: Bifunctional protein glk (641 aa).

Residues 1 to 21 (MSTGAQTKAAEASQHADGPRL) are disordered. The tract at residues 1-340 (MSTGAQTKAA…QLSNRTGGAS (340 aa)) is glucokinase. Residue 23-28 (ADVGGT) coordinates ATP. The region spanning 341–417 (SAVFERIRQM…LKLATGLTGT (77 aa)) is the HTH rpiR-type domain. The interval 341-641 (SAVFERIRQM…SHGAAPAAKE (301 aa)) is putative HTH-type transcriptional regulator. A DNA-binding region (H-T-H motif) is located at residues 377–396 (IVDIARKADVSQPTVIRFCR). The 140-residue stretch at 461–600 (AIDILNNARR…AVGVAIRRAS (140 aa)) folds into the SIS domain. A helical membrane pass occupies residues 576-596 (SMISRILHLVMIDILAVGVAI).

It in the N-terminal section; belongs to the bacterial glucokinase family.

The protein localises to the membrane. It catalyses the reaction D-glucose + ATP = D-glucose 6-phosphate + ADP + H(+). In Burkholderia thailandensis (strain ATCC 700388 / DSM 13276 / CCUG 48851 / CIP 106301 / E264), this protein is Bifunctional protein glk (glk).